Consider the following 102-residue polypeptide: NADH-quinone oxidoreductase subunit K (102 aa).

3 helical membrane passes run 6–26 (MEHG…GLMV), 30–50 (ILFV…AFVV), and 62–82 (IMFI…LAIL).

Belongs to the complex I subunit 4L family. As to quaternary structure, NDH-1 is composed of 13 different subunits. Subunits NuoA, H, J, K, L, M, N constitute the membrane sector of the complex.

Its subcellular location is the cell inner membrane. The enzyme catalyses a quinone + NADH + 5 H(+)(in) = a quinol + NAD(+) + 4 H(+)(out). Functionally, NDH-1 shuttles electrons from NADH, via FMN and iron-sulfur (Fe-S) centers, to quinones in the respiratory chain. The immediate electron acceptor for the enzyme in this species is believed to be ubiquinone. Couples the redox reaction to proton translocation (for every two electrons transferred, four hydrogen ions are translocated across the cytoplasmic membrane), and thus conserves the redox energy in a proton gradient. The chain is NADH-quinone oxidoreductase subunit K from Azotobacter vinelandii (strain DJ / ATCC BAA-1303).